Reading from the N-terminus, the 901-residue chain is HTH-type transcriptional regulator MalT (901 aa).

39–46 (SPAGYGKT) is a binding site for ATP. Residues 829–894 (ELIRTSPLTQ…DAVQHAQQLL (66 aa)) enclose the HTH luxR-type domain. A DNA-binding region (H-T-H motif) is located at residues 853 to 872 (NDQIAGELDVAATTIKTHIR).

Belongs to the MalT family. In terms of assembly, monomer in solution. Oligomerizes to an active state in the presence of the positive effectors ATP and maltotriose.

With respect to regulation, activated by ATP and maltotriose, which are both required for DNA binding. In terms of biological role, positively regulates the transcription of the maltose regulon whose gene products are responsible for uptake and catabolism of malto-oligosaccharides. Specifically binds to the promoter region of its target genes, recognizing a short DNA motif called the MalT box. In Cronobacter sakazakii (strain ATCC BAA-894) (Enterobacter sakazakii), this protein is HTH-type transcriptional regulator MalT.